The sequence spans 732 residues: Small conductance calcium-activated potassium channel protein 3 (732 aa).

Over residues 1–11 (MDTSGHFHDSG) the composition is skewed to basic and acidic residues. 2 disordered regions span residues 1–82 (MDTS…QQAP) and 119–161 (AILH…QASP). Residues 35–61 (QPPPPPAPPAVPQQPPGPLLQPQPPQP) show a composition bias toward pro residues. The segment covering 62–82 (QQQQSQQQQQQQSQQQQQQAP) has biased composition (low complexity). Over residues 119 to 133 (AILHPSSRQGSQLNL) the composition is skewed to polar residues. The segment covering 139–148 (GHSPSSTATS) has biased composition (low complexity). Ser168 carries the phosphoserine modification. A compositionally biased stretch (polar residues) spans 241-257 (THNHQHAGTTAGSTTFP). The disordered stretch occupies residues 241–260 (THNHQHAGTTAGSTTFPKAN). The chain crosses the membrane as a helical span at residues 289-309 (LIFGMFGIVVMVIETELSWGL). Residues 316–336 (FSLALKCLISLSTVILLGLII) form a helical membrane-spanning segment. The chain crosses the membrane as a helical span at residues 367–387 (ISLEMLVCAIHPIPGEYKFFW). The chain crosses the membrane as a helical span at residues 406–426 (IILSIPMFLRLYLIARVMLLH). The helical transmembrane segment at 455-475 (LMTICPGTVLLVFSISLWIIA) threads the bilayer. The pore-forming intramembrane region spans 495-515 (FLGAMWLISITFLSIGYGDMV). Residues 524-544 (VCLLTGIMGAGCTALVVAVVA) form a helical membrane-spanning segment. Residues 562–638 (DTQLTKRIKN…LVDLSKMQNV (77 aa)) are calmodulin-binding. A coiled-coil region spans residues 643-670 (ITELNDRSEDLEKQIGSLESKLEHLTAS). Positions 704-732 (GTSHAPPSDSPIGISSTSFPTPYTSSSSC) are disordered. Low complexity predominate over residues 718-732 (SSTSFPTPYTSSSSC).

This sequence belongs to the potassium channel KCNN family. KCa2.3/KCNN3 subfamily. In terms of assembly, homodimer. Heteromultimer with KCNN2 or KCNN1; this modulates plasma membrane expression and consequently the small conductance calcium-activated potassium channel activity. The complex is composed of 4 channel subunits each of which binds to a calmodulin subunit which regulates the channel activity through calcium-binding. Interacts with CALM1. As to expression, expressed at low levels in atrial and ventricular myocytes (at protein level).

Its subcellular location is the cell membrane. The protein resides in the cytoplasm. The protein localises to the myofibril. It is found in the sarcomere. It localises to the z line. The catalysed reaction is K(+)(in) = K(+)(out). With respect to regulation, inhibited by bee venom neurotoxin apamin. Its function is as follows. Small conductance calcium-activated potassium channel that mediates the voltage-independent transmembrane transfer of potassium across the cell membrane through a constitutive interaction with calmodulin which binds the intracellular calcium allowing its opening. The current is characterized by a voltage-independent activation, an intracellular calcium concentration increase-dependent activation and a single-channel conductance of 10 picosiemens. Also presents an inwardly rectifying current, thus reducing its already small outward conductance of potassium ions, which is particularly the case when the membrane potential displays positive values, above + 20 mV. Activation is followed by membrane hyperpolarization. Thought to regulate neuronal excitability by contributing to the slow component of synaptic afterhyperpolarization. The protein is Small conductance calcium-activated potassium channel protein 3 of Mus musculus (Mouse).